The sequence spans 277 residues: Acyl-coenzyme A thioesterase MBLAC2 (277 aa).

The Zn(2+) site is built by His80, His82, Asp84, His85, His167, Asp186, and His228.

This sequence belongs to the metallo-beta-lactamase superfamily. Glyoxalase II family. Zn(2+) serves as cofactor.

It is found in the endoplasmic reticulum membrane. The protein localises to the cell membrane. The catalysed reaction is hexadecanoyl-CoA + H2O = hexadecanoate + CoA + H(+). It carries out the reaction dodecanoyl-CoA + H2O = dodecanoate + CoA + H(+). It catalyses the reaction tetradecanoyl-CoA + H2O = tetradecanoate + CoA + H(+). The enzyme catalyses octadecanoyl-CoA + H2O = octadecanoate + CoA + H(+). The catalysed reaction is a beta-lactam + H2O = a substituted beta-amino acid. Its function is as follows. Acyl-CoA thioesterases are a group of enzymes that catalyze the hydrolysis of acyl-CoAs to the free fatty acid and coenzyme A (CoASH), providing the potential to regulate intracellular levels of acyl-CoAs, free fatty acids and CoASH. Has an acyl-CoA thioesterase activity towards the long chain fatty acyl-CoA thioester palmitoyl-CoA (hexadecanoyl-CoA; C16:0-CoA). Displays a substrate preference for fatty acyl-CoAs with chain-lengths C12-C18. This is Acyl-coenzyme A thioesterase MBLAC2 (MBLAC2) from Gallus gallus (Chicken).